The sequence spans 360 residues: MKPSIYGLTRDELIAWAIDNGQKAFRATQIWDWLYRKRVQSFDEMTNISKEFLAILKDSFCINPLKQRVAQESADGTVKYLFELPDGMLIETVLMRQHYGQSVCVTTQVGCNIGCTFCASGLIKKQRDLNSGEITAQIMMVQNYFDQRGQDERVSHVVVMGIGEPFDNYQNVMTFLRTINDDHGLAIGARHITVSTSGLAHKIREFANEGVQVNLAVSLHAPNNELRSSIMRINRSFPLDKLFSAIEYYIETTNRRVTFEYIMLNKVNDGVEQAQELADLTKRIRKLSYVNLIPYNPVSEHDQYSRSPKERVAAFYDILKKNGVNCVVRQEHGTDIDAACGQLRSNTMKKDRQKAATART.

Glutamate 91 (proton acceptor) is an active-site residue. Positions 97 to 335 (QHYGQSVCVT…CVVRQEHGTD (239 aa)) constitute a Radical SAM core domain. A disulfide bridge links cysteine 104 with cysteine 340. Residues cysteine 111, cysteine 115, and cysteine 118 each contribute to the [4Fe-4S] cluster site. S-adenosyl-L-methionine-binding positions include 163–164 (GE), serine 195, 218–220 (SLH), and asparagine 296. Cysteine 340 functions as the S-methylcysteine intermediate in the catalytic mechanism.

Belongs to the radical SAM superfamily. RlmN family. The cofactor is [4Fe-4S] cluster.

The protein localises to the cytoplasm. It catalyses the reaction adenosine(2503) in 23S rRNA + 2 reduced [2Fe-2S]-[ferredoxin] + 2 S-adenosyl-L-methionine = 2-methyladenosine(2503) in 23S rRNA + 5'-deoxyadenosine + L-methionine + 2 oxidized [2Fe-2S]-[ferredoxin] + S-adenosyl-L-homocysteine. It carries out the reaction adenosine(37) in tRNA + 2 reduced [2Fe-2S]-[ferredoxin] + 2 S-adenosyl-L-methionine = 2-methyladenosine(37) in tRNA + 5'-deoxyadenosine + L-methionine + 2 oxidized [2Fe-2S]-[ferredoxin] + S-adenosyl-L-homocysteine. Specifically methylates position 2 of adenine 2503 in 23S rRNA and position 2 of adenine 37 in tRNAs. The sequence is that of Probable dual-specificity RNA methyltransferase RlmN from Streptococcus equi subsp. zooepidemicus (strain H70).